The chain runs to 457 residues: tRNA modification GTPase MnmE (457 aa).

(6S)-5-formyl-5,6,7,8-tetrahydrofolate is bound by residues R25, E87, and R126. The TrmE-type G domain occupies 223 to 377 (GIATAIIGRP…IEEKINQLFF (155 aa)). Position 233 (N233) interacts with K(+). GTP contacts are provided by residues 233-238 (NVGKSS), 252-258 (TDIAGTT), and 277-280 (DTAG). S237 serves as a coordination point for Mg(2+). Positions 252, 254, and 257 each coordinate K(+). Residue T258 coordinates Mg(2+). Position 457 (K457) interacts with (6S)-5-formyl-5,6,7,8-tetrahydrofolate.

The protein belongs to the TRAFAC class TrmE-Era-EngA-EngB-Septin-like GTPase superfamily. TrmE GTPase family. In terms of assembly, homodimer. Heterotetramer of two MnmE and two MnmG subunits. The cofactor is K(+).

The protein localises to the cytoplasm. Its function is as follows. Exhibits a very high intrinsic GTPase hydrolysis rate. Involved in the addition of a carboxymethylaminomethyl (cmnm) group at the wobble position (U34) of certain tRNAs, forming tRNA-cmnm(5)s(2)U34. The sequence is that of tRNA modification GTPase MnmE from Streptococcus suis (strain 98HAH33).